An 81-amino-acid chain; its full sequence is Sulfur carrier protein TusA (81 aa).

Cys19 serves as the catalytic Cysteine persulfide intermediate.

The protein belongs to the sulfur carrier protein TusA family. In terms of assembly, interacts with IscS.

The protein resides in the cytoplasm. It participates in tRNA modification. Functionally, sulfur carrier protein involved in sulfur trafficking in the cell. Part of a sulfur-relay system required for 2-thiolation during synthesis of 2-thiouridine of the modified wobble base 5-methylaminomethyl-2-thiouridine (mnm(5)s(2)U) in tRNA. Interacts with IscS and stimulates its cysteine desulfurase activity. Accepts an activated sulfur from IscS, which is then transferred to TusD, and thus determines the direction of sulfur flow from IscS to 2-thiouridine formation. Also appears to be involved in sulfur transfer for the biosynthesis of molybdopterin. This Escherichia coli O17:K52:H18 (strain UMN026 / ExPEC) protein is Sulfur carrier protein TusA.